Consider the following 421-residue polypeptide: UDP-N-acetylglucosamine 1-carboxyvinyltransferase (421 aa).

Phosphoenolpyruvate is bound at residue 26–27; the sequence is KN. Arginine 96 is a binding site for UDP-N-acetyl-alpha-D-glucosamine. The active-site Proton donor is the aspartate 120. Residues aspartate 308 and valine 330 each coordinate UDP-N-acetyl-alpha-D-glucosamine.

This sequence belongs to the EPSP synthase family. MurA subfamily.

Its subcellular location is the cytoplasm. It carries out the reaction phosphoenolpyruvate + UDP-N-acetyl-alpha-D-glucosamine = UDP-N-acetyl-3-O-(1-carboxyvinyl)-alpha-D-glucosamine + phosphate. It participates in cell wall biogenesis; peptidoglycan biosynthesis. Its function is as follows. Cell wall formation. Adds enolpyruvyl to UDP-N-acetylglucosamine. In Corynebacterium efficiens (strain DSM 44549 / YS-314 / AJ 12310 / JCM 11189 / NBRC 100395), this protein is UDP-N-acetylglucosamine 1-carboxyvinyltransferase.